The primary structure comprises 60 residues: Large ribosomal subunit protein bL32 (60 aa).

The segment at 1–60 is disordered; sequence MAVQQVKKSRSKRDMRRSHDSLTGPTLSTDKSTGELHLRHHVSPNGFYKGKKVVDTKSED. Residues 7-16 are compositionally biased toward basic residues; that stretch reads KKSRSKRDMR.

Belongs to the bacterial ribosomal protein bL32 family.

This chain is Large ribosomal subunit protein bL32, found in Francisella philomiragia subsp. philomiragia (strain ATCC 25017 / CCUG 19701 / FSC 153 / O#319-036).